Reading from the N-terminus, the 685-residue chain is MTRKILVTSALPYANGSIHLGHMVEHIQTDVWVRFQKLRGHACHYCCADDTHGTPVMLAAQKQGIAPEDMIAKVREEHLADFTGFFIGYDNYYSTHSPENKQFSQDIYRALKANGKIESRVIEQLFDPEKQMFLPDRFVKGECPKCHAQDQYGDNCEVCGTTYSPTELINPYSAVSGTKPELRESEHFFFKLGECADFLKAWTSGNNPHDGKPHLQAEALNKMKEWLGEGEETTLSDWDISRDAPYFGFEIPDAPGKYFYVWLDAPVGYMASFKNLCDRIGVDFDEYFKADSQTEMYHFIGKDILYFHALFWPAMLHFSGHRAPTGVYAHGFLTVDGQKMSKSRGTFITAKSYLEQGLNPEWMRYYIAAKLNSKIEDIDLNLQDFISRVNSDLVGKYVNIAARASGFIAKRFEGRLKDVADSELLAKLTAQSEAIAECYESREYAKALRDIMALADIVNEYVDANKPWELAKQEGQDERLHEVCSELINAFTMLTAYLAPVLPQTAANAAKFLNLEAITWANTRDTLGKHAINKYEHLMQRVEQKQVDDLIEANKQSIAAAAAPAAEEGKYEKVAEQASFDDFMKIDMRVAKVLNCEAVEGSTKLLKFDLDFGFEKRIIFSGIAASYPNPAELNGRMVIAVANFAPRKMAKFGVSEGMILSAATADGKLKLLDVDTGAQPGDKVG.

Residues 12-22 carry the 'HIGH' region motif; it reads PYANGSIHLGH. The Zn(2+) site is built by Cys-143, Cys-146, Cys-156, and Cys-159. The short motif at 339 to 343 is the 'KMSKS' region element; it reads KMSKS. Position 342 (Lys-342) interacts with ATP. The tRNA-binding domain occupies 582–685; it reads DFMKIDMRVA…TGAQPGDKVG (104 aa).

It belongs to the class-I aminoacyl-tRNA synthetase family. MetG type 1 subfamily. In terms of assembly, homodimer. Requires Zn(2+) as cofactor.

It localises to the cytoplasm. The catalysed reaction is tRNA(Met) + L-methionine + ATP = L-methionyl-tRNA(Met) + AMP + diphosphate. In terms of biological role, is required not only for elongation of protein synthesis but also for the initiation of all mRNA translation through initiator tRNA(fMet) aminoacylation. This Neisseria meningitidis serogroup B (strain ATCC BAA-335 / MC58) protein is Methionine--tRNA ligase.